The primary structure comprises 396 residues: Elongation factor Tu 1 (396 aa).

The region spanning 10 to 206 is the tr-type G domain; it reads KPHVNVGTIG…TLDTYIPEPE (197 aa). The interval 19 to 26 is G1; it reads GHVDHGKT. GTP is bound at residue 19–26; that stretch reads GHVDHGKT. Threonine 26 provides a ligand contact to Mg(2+). Residues 60–64 are G2; sequence GITIN. The tract at residues 81–84 is G3; sequence DCPG. GTP-binding positions include 81–85 and 136–139; these read DCPGH and NKCD. The tract at residues 136-139 is G4; the sequence is NKCD. Residues 174–176 are G5; the sequence is SAL.

Belongs to the TRAFAC class translation factor GTPase superfamily. Classic translation factor GTPase family. EF-Tu/EF-1A subfamily. In terms of assembly, monomer.

It localises to the cytoplasm. It catalyses the reaction GTP + H2O = GDP + phosphate + H(+). GTP hydrolase that promotes the GTP-dependent binding of aminoacyl-tRNA to the A-site of ribosomes during protein biosynthesis. The sequence is that of Elongation factor Tu 1 from Psychrobacter sp. (strain PRwf-1).